The primary structure comprises 738 residues: MADTQYILPNDIGVSSLDCREAFRLLSPTERLYAHHLSRAAWYGGLAVLLQTSPEAPYIYALLSRLFRAQDPDQLRQHALAEGLTEEEYQAFLVYAAGVYSNMGNYKSFGDTKFVPNLPKDKLGRVILGSKAAQQRPEEVRDLWQTCGDLMFSLEPRLRHLGLGKEGVTTYFSGDCTMEDAKLAQDFLDSQNLSAYNTRLFKVVGQEGKSHYEVRLASVLNTDPALDSELTSKLKRYEFQGNHFQVTRGDYAPILQKVVEHLEKAKAYAANSHQEQMLAQYVESFTQGSIEAHKRGSRFWIQDKGPIVESYIGFIESYRDPFGSRGEFEGFVAMVNKAMSAKFERLVASAEQLLKELPWPLAFEKDKFLTPDFTSLDVLTFAGSGIPAGINIPNYDDLRQTEGFKNVSLGNVLAVAYAAKREKLTFLEEEDKDLYIRWKGPSFDVQVGLHELLGHGSGKLFVQDEKGAFNFDKETVINPETGEQIQSWYRSGETWDSKFSTIASSYEECRAESVGLYLCLNPQVLEIFGFEGADAEDVIYVNWLNMVRAGLLALEFYTPEAANWRQAHMQARFVILRVLLEAGEGLVTVTPTTGSDGRPDARVRLDRSKIRSVGRPALERFLRRLQVLKSTGDVVAGRALYEGYAAVTDAPPECFLTLRDTVLLRKESRKLIVQPNTRLEGSEVQLVEYEASAAGLIRSFCERFPEDGPELEEVLIQLAAADARFWRNQAQEAPPGQA.

Ala-2 is subject to N-acetylalanine. His-450 serves as a coordination point for Zn(2+). Residue Glu-451 is part of the active site. Zn(2+) is bound by residues His-455 and Glu-508.

Belongs to the peptidase M49 family. Requires Zn(2+) as cofactor.

The protein localises to the cytoplasm. It localises to the cytosol. The catalysed reaction is Release of an N-terminal dipeptide from a peptide comprising four or more residues, with broad specificity. Also acts on dipeptidyl 2-naphthylamides.. Functionally, cleaves and degrades bioactive peptides, including angiotensin, Leu-enkephalin and Met-enkephalin. Also cleaves Arg-Arg-beta-naphthylamide (in vitro). In Mus musculus (Mouse), this protein is Dipeptidyl peptidase 3 (Dpp3).